A 357-amino-acid polypeptide reads, in one-letter code: Ribosomal RNA large subunit methyltransferase M (357 aa).

S-adenosyl-L-methionine-binding positions include Ser183, Ala216–Gly219, Asp235, Asp255, and Asp271. Lys300 functions as the Proton acceptor in the catalytic mechanism.

It belongs to the class I-like SAM-binding methyltransferase superfamily. RNA methyltransferase RlmE family. RlmM subfamily. As to quaternary structure, monomer.

It localises to the cytoplasm. It carries out the reaction cytidine(2498) in 23S rRNA + S-adenosyl-L-methionine = 2'-O-methylcytidine(2498) in 23S rRNA + S-adenosyl-L-homocysteine + H(+). In terms of biological role, catalyzes the 2'-O-methylation at nucleotide C2498 in 23S rRNA. This chain is Ribosomal RNA large subunit methyltransferase M, found in Pseudomonas fluorescens (strain ATCC BAA-477 / NRRL B-23932 / Pf-5).